The sequence spans 667 residues: Probable Na(+)/H(+) antiporter nhx-9 (667 aa).

A run of 8 helical transmembrane segments spans residues 41–61, 73–93, 97–117, 128–148, 165–185, 192–212, 236–256, and 268–288; these read VYVITVWLLIASLAKILFNLM, LLIIVGLALGWILHQTSLSGA, SHTFFLYLLPPIIFDAGYFMP, VLVFSVFGTIWNTFAIGGSLL, ILVFSALISAVDPVAVIAVFE, FLFINVFGEALFNDGVTVVLY, LSFFVVALGGAAVGIIFAIAA, and ILAPVFIFVLPYMAYLTAEMV. Residue N310 is glycosylated (N-linked (GlcNAc...) asparagine). The next 4 membrane-spanning stretches (helical) occupy residues 325 to 345, 351 to 371, 390 to 410, and 418 to 438; these read MLAQSSETVIFMFLGLSTISS, LYFICATLFFCLIYRAIGIVV, FIMSYGGLRGAIAYGLVVSIP, and MFITATIAVIYFTVFLQGITI. The disordered stretch occupies residues 637-667; that stretch reads TEQLPSETPFHSGRRQSTGDLNATRRADFNV. T644 carries the phosphothreonine modification.

It belongs to the monovalent cation:proton antiporter 1 (CPA1) transporter (TC 2.A.36) family. In terms of processing, phosphorylated. In early stage larva, expressed in the twin excretory cell processes. At later larval stages, expression is more restricted, resulting in a 'beads on a chain' appearance.

It localises to the cell membrane. Serves some physiological function other than regulation of cellular pH. The polypeptide is Probable Na(+)/H(+) antiporter nhx-9 (nhx-9) (Caenorhabditis elegans).